Here is a 452-residue protein sequence, read N- to C-terminus: Trigger factor (452 aa).

One can recognise a PPIase FKBP-type domain in the interval 170-256; that stretch reads NSIVKVDFVE…IKSIKKRDLP (87 aa).

The protein belongs to the FKBP-type PPIase family. Tig subfamily.

It is found in the cytoplasm. The catalysed reaction is [protein]-peptidylproline (omega=180) = [protein]-peptidylproline (omega=0). Its function is as follows. Involved in protein export. Acts as a chaperone by maintaining the newly synthesized protein in an open conformation. Functions as a peptidyl-prolyl cis-trans isomerase. The protein is Trigger factor of Borrelia garinii subsp. bavariensis (strain ATCC BAA-2496 / DSM 23469 / PBi) (Borreliella bavariensis).